Consider the following 116-residue polypeptide: NADH-ubiquinone oxidoreductase chain 3 (116 aa).

3 helical membrane-spanning segments follow: residues Leu-3 to Phe-23, Phe-56 to Leu-76, and Ala-84 to Ile-104.

This sequence belongs to the complex I subunit 3 family.

The protein localises to the mitochondrion membrane. The catalysed reaction is a ubiquinone + NADH + 5 H(+)(in) = a ubiquinol + NAD(+) + 4 H(+)(out). Its function is as follows. Core subunit of the mitochondrial membrane respiratory chain NADH dehydrogenase (Complex I) that is believed to belong to the minimal assembly required for catalysis. Complex I functions in the transfer of electrons from NADH to the respiratory chain. The immediate electron acceptor for the enzyme is believed to be ubiquinone. This Oncorhynchus nerka (Sockeye salmon) protein is NADH-ubiquinone oxidoreductase chain 3 (MT-ND3).